Reading from the N-terminus, the 466-residue chain is Soluble pyridine nucleotide transhydrogenase (466 aa).

Residue 36 to 45 coordinates FAD; that stretch reads EKESSVGGGC.

It belongs to the class-I pyridine nucleotide-disulfide oxidoreductase family. Requires FAD as cofactor.

It is found in the cytoplasm. The catalysed reaction is NAD(+) + NADPH = NADH + NADP(+). In terms of biological role, conversion of NADPH, generated by peripheral catabolic pathways, to NADH, which can enter the respiratory chain for energy generation. The protein is Soluble pyridine nucleotide transhydrogenase of Vibrio parahaemolyticus serotype O3:K6 (strain RIMD 2210633).